We begin with the raw amino-acid sequence, 333 residues long: 4-hydroxyproline 2-epimerase (333 aa).

The active-site Proton acceptor is the C91. Substrate is bound by residues 92–93 (GH), H225, and D250. The active-site Proton donor is C254. 255–256 (GT) contributes to the substrate binding site.

The protein belongs to the proline racemase family.

The enzyme catalyses trans-4-hydroxy-L-proline = cis-4-hydroxy-D-proline. Its function is as follows. Catalyzes the epimerization of trans-4-hydroxy-L-proline (t4LHyp) to cis-4-hydroxy-D-proline (c4DHyp). Is likely involved in a degradation pathway that converts t4LHyp to alpha-ketoglutarate. Displays no proline racemase activity. This is 4-hydroxyproline 2-epimerase from Streptosporangium roseum (strain ATCC 12428 / DSM 43021 / JCM 3005 / KCTC 9067 / NCIMB 10171 / NRRL 2505 / NI 9100).